We begin with the raw amino-acid sequence, 191 residues long: Glycerol-3-phosphate acyltransferase (191 aa).

6 helical membrane-spanning segments follow: residues 7–27 (ILVL…SYIG), 51–71 (KLAV…VMLA), 80–100 (FVFM…WLSF), 115–135 (FIEY…FVIF), 139–159 (SLSS…HYSA), and 161–181 (ESIT…ENIV).

This sequence belongs to the PlsY family. Probably interacts with PlsX.

It is found in the cell inner membrane. The enzyme catalyses an acyl phosphate + sn-glycerol 3-phosphate = a 1-acyl-sn-glycero-3-phosphate + phosphate. Its pathway is lipid metabolism; phospholipid metabolism. Functionally, catalyzes the transfer of an acyl group from acyl-phosphate (acyl-PO(4)) to glycerol-3-phosphate (G3P) to form lysophosphatidic acid (LPA). This enzyme utilizes acyl-phosphate as fatty acyl donor, but not acyl-CoA or acyl-ACP. The protein is Glycerol-3-phosphate acyltransferase of Ehrlichia canis (strain Jake).